Reading from the N-terminus, the 932-residue chain is Eukaryotic translation initiation factor 3 subunit A (932 aa).

Positions 309–492 constitute a PCI domain; it reads KPATANFVIL…NSISFSSDLF (184 aa). Phosphoserine is present on residues Ser374 and Ser501. A coiled-coil region spans residues 537 to 862; that stretch reads LRKQQAEAAY…DEEISRKLAE (326 aa). Residues 793 to 865 show a composition bias toward basic and acidic residues; the sequence is AEEEAARAAE…ISRKLAEKAA (73 aa). Residues 793-932 form a disordered region; it reads AEEEAARAAE…PPSRRNQQQQ (140 aa). Phosphoserine occurs at positions 874, 875, and 877. Residues 877–893 are compositionally biased toward low complexity; it reads SPGAWRRGGASAGGVSR.

This sequence belongs to the eIF-3 subunit A family. As to quaternary structure, component of the eukaryotic translation initiation factor 3 (eIF-3) complex. The eIF-3 complex appears to include tif32/eif3a, SPAC25G10.08/eif3b, tif33/eif3c, SPBC4C3.07/eif3f, tif35/eif3g and sum1/eif3i. This set of common subunits may also associate exclusively with either moe1/eif3d and int6/eif3e, or with SPAC821.05/eif3h and SPAC1751.03/eif3m. The eIF-3 complex may also include SPAC3A12.13c/eif3j.

The protein localises to the cytoplasm. RNA-binding component of the eukaryotic translation initiation factor 3 (eIF-3) complex, which is involved in protein synthesis of a specialized repertoire of mRNAs and, together with other initiation factors, stimulates binding of mRNA and methionyl-tRNAi to the 40S ribosome. The eIF-3 complex specifically targets and initiates translation of a subset of mRNAs involved in cell proliferation. The protein is Eukaryotic translation initiation factor 3 subunit A (tif32) of Schizosaccharomyces pombe (strain 972 / ATCC 24843) (Fission yeast).